Here is a 376-residue protein sequence, read N- to C-terminus: DNA methyltransferase CcrM (376 aa).

Residues 273–370 (KATLSVMTGK…IDELRSVIRN (98 aa)) enclose the RAMA domain.

Belongs to the N(4)/N(6)-methyltransferase family.

It carries out the reaction a 2'-deoxyadenosine in DNA + S-adenosyl-L-methionine = an N(6)-methyl-2'-deoxyadenosine in DNA + S-adenosyl-L-homocysteine + H(+). Its function is as follows. A beta subtype methylase that recognizes the double-stranded sequence 5'-GANTC-3' and methylates A-2 on both strands. Overexpression leads to many branched and bloated cells, two to three times the size of wild-type cells, and cells that have 1-3 times the normal amount of DNA. Contributes to the accurate cell-cycle control of DNA replication and cellular morphology. Can fully replace its ortholog in C.crescentus. This is DNA methyltransferase CcrM (smeIM) from Rhizobium meliloti (strain 1021) (Ensifer meliloti).